Here is a 101-residue protein sequence, read N- to C-terminus: Urease subunit beta (101 aa).

It belongs to the urease beta subunit family. In terms of assembly, heterotrimer of UreA (gamma), UreB (beta) and UreC (alpha) subunits. Three heterotrimers associate to form the active enzyme.

It localises to the cytoplasm. The enzyme catalyses urea + 2 H2O + H(+) = hydrogencarbonate + 2 NH4(+). It functions in the pathway nitrogen metabolism; urea degradation; CO(2) and NH(3) from urea (urease route): step 1/1. This is Urease subunit beta from Cupriavidus metallidurans (strain ATCC 43123 / DSM 2839 / NBRC 102507 / CH34) (Ralstonia metallidurans).